Here is a 224-residue protein sequence, read N- to C-terminus: MTDSSWPTDERPRERLLAHGAQSLSDAELLAIFLRTGTTGMPVMALARHLIDEFSGLRGLMTASRRQFLQVKGLGTAKYAQVQAAMEMARRVMDEPLRQGDPLRSPADTRRFLTSRLGTYPHEVFAGLFLDNRHRVIQYRELFRGTIDGAAVYPREVVRQALEDNAAAVIFAHNHPSGVAEPSQADISLTRRLKEALGLVDIRVLDHMVIGHGEVISLAERGLM.

The 123-residue stretch at 102–224 (PLRSPADTRR…VISLAERGLM (123 aa)) folds into the MPN domain. Residues His173, His175, and Asp186 each contribute to the Zn(2+) site. Residues 173–186 (HNHPSGVAEPSQAD) carry the JAMM motif motif.

The protein belongs to the UPF0758 family.

The polypeptide is UPF0758 protein Maqu_3564 (Marinobacter nauticus (strain ATCC 700491 / DSM 11845 / VT8) (Marinobacter aquaeolei)).